Consider the following 432-residue polypeptide: Serine--tRNA ligase (432 aa).

An L-serine-binding site is contributed by 235 to 237 (TSE). ATP is bound at residue 266–268 (RSE). E289 provides a ligand contact to L-serine. 353-356 (EISS) is a binding site for ATP. Residue S388 participates in L-serine binding.

It belongs to the class-II aminoacyl-tRNA synthetase family. Type-1 seryl-tRNA synthetase subfamily. As to quaternary structure, homodimer. The tRNA molecule binds across the dimer.

It is found in the cytoplasm. The catalysed reaction is tRNA(Ser) + L-serine + ATP = L-seryl-tRNA(Ser) + AMP + diphosphate + H(+). The enzyme catalyses tRNA(Sec) + L-serine + ATP = L-seryl-tRNA(Sec) + AMP + diphosphate + H(+). It participates in aminoacyl-tRNA biosynthesis; selenocysteinyl-tRNA(Sec) biosynthesis; L-seryl-tRNA(Sec) from L-serine and tRNA(Sec): step 1/1. Its function is as follows. Catalyzes the attachment of serine to tRNA(Ser). Is also able to aminoacylate tRNA(Sec) with serine, to form the misacylated tRNA L-seryl-tRNA(Sec), which will be further converted into selenocysteinyl-tRNA(Sec). This chain is Serine--tRNA ligase, found in Paraburkholderia phymatum (strain DSM 17167 / CIP 108236 / LMG 21445 / STM815) (Burkholderia phymatum).